Consider the following 399-residue polypeptide: Elongation factor Tu (399 aa).

The region spanning 10-204 (KPHVNIGTIG…AVDASIPEPE (195 aa)) is the tr-type G domain. The tract at residues 19-26 (GHVDHGKT) is G1. GTP is bound at residue 19-26 (GHVDHGKT). Thr-26 contacts Mg(2+). Residues 60-64 (GITIN) form a G2 region. Positions 81–84 (DCPG) are G3. Residues 81 to 85 (DCPGH) and 136 to 139 (NKCD) contribute to the GTP site. Residues 136–139 (NKCD) are G4. The G5 stretch occupies residues 174–176 (SGL).

The protein belongs to the TRAFAC class translation factor GTPase superfamily. Classic translation factor GTPase family. EF-Tu/EF-1A subfamily. Monomer.

The protein resides in the cytoplasm. The catalysed reaction is GTP + H2O = GDP + phosphate + H(+). Functionally, GTP hydrolase that promotes the GTP-dependent binding of aminoacyl-tRNA to the A-site of ribosomes during protein biosynthesis. This is Elongation factor Tu from Prochlorococcus marinus (strain NATL1A).